The chain runs to 374 residues: Regulator of G-protein signaling 20 (374 aa).

A compositionally biased stretch (polar residues) spans 1–11 (MPRLSQDNQQG). Disordered regions lie at residues 1–21 (MPRL…RPSR) and 135–158 (PPGG…PPMG). A compositionally biased stretch (basic residues) spans 12-21 (HQKHFSRPSR). Positions 248 to 364 (SFDKLMLTPA…MNSALYKDLL (117 aa)) constitute an RGS domain.

In terms of assembly, forms a complex with G(alpha)z/i2 subunits and mu-opioid receptors; the formation of this complex results in mu-opioid receptor desensitization. Interacts with OPRM1. Post-translationally, fatty acylated. Heavily palmitoylated in the cysteine string motif. N- and O-glycosylated in synapsomal membranes. In terms of processing, serine phosphorylated in synapsomal membranes. Post-translationally, sumoylated with SUMO1 and SUMO2 in synaptosomes. The sumoylated forms act as a scaffold for sequestering mu-opioid receptor-activated G(alpha) subunits. As to expression, retinal-specific. Expressed throughout the retina, including photoreceptors.

It is found in the membrane. It localises to the nucleus. The protein localises to the cytoplasm. Functionally, inhibits signal transduction by increasing the GTPase activity of G protein alpha subunits thereby driving them into their inactive GDP-bound form. Binds selectively to G(z)-alpha and G(alpha)-i2 subunits, accelerates their GTPase activity and regulates their signaling activities. The G(z)-alpha activity is inhibited by the phosphorylation and palmitoylation of the G-protein. Negatively regulates mu-opioid receptor-mediated activation of the G-proteins. This is Regulator of G-protein signaling 20 (RGS20) from Bos taurus (Bovine).